Reading from the N-terminus, the 75-residue chain is MNQKHSSDFVVIKAVEDGVNVIGLTRGTDTKFHHSEKLDKGEVIIAQFTEHTSAIKVRGEALIQTAYGEMKSEKK.

It belongs to the MtrB family. As to quaternary structure, oligomer of 11 identical subunits arranged in doughnut-like structure.

Required for transcription attenuation control in the trp operon. This trans-acting factor binds to trinucleotide repeats (GAG or UAG) located in the trp leader transcript causing transcription termination. Binds the leader RNA only in presence of L-tryptophan. The chain is Transcription attenuation protein MtrB (mtrB) from Bacillus subtilis (strain 168).